Consider the following 474-residue polypeptide: Neuronal acetylcholine receptor subunit eat-2 (474 aa).

Positions 1-21 (MTLKIAFFTLILLVSIERVYS) are cleaved as a signal peptide. Residues 22-237 (SDEEYRLLKD…MHLKRRTMYY (216 aa)) are Extracellular-facing. N-linked (GlcNAc...) asparagine glycosylation occurs at N95. C149 and C163 form a disulfide bridge. Helical transmembrane passes span 238-258 (GLNW…GFTM), 266-286 (ITLQ…VSEV), and 303-323 (LSIV…NIFF). At 324–440 (RHPKTHRMGD…WRFMAMVIDR (117 aa)) the chain is on the cytoplasmic side. Residues 359 to 378 (PRREEEKNDEEAGGDGTKLL) form a disordered region. The helical transmembrane segment at 441-461 (LSLFLFTGLIFGTTALIFAFC) threads the bilayer.

Belongs to the ligand-gated ion channel (TC 1.A.9) family. Acetylcholine receptor (TC 1.A.9.1) subfamily. In terms of assembly, neuronal AChR seems to be composed of two different type of subunits: alpha and beta. As to expression, expressed in pharyngeal muscle.

It localises to the postsynaptic cell membrane. It is found in the cell membrane. Functionally, after binding acetylcholine, the AChR responds by an extensive change in conformation that affects all subunits and leads to opening of an ion-conducting channel across the plasma membrane. Nicotinic acetylcholine receptor in the MC pharyngeal motor neuron involved in pharyngeal pumping. Has a role in the determination of life span possibly via calorific restriction which affects growth rate, although this is independent of metabolic activity. Plays a role in the defense against the accumulation of ingested live pathogenic bacteria in the intestine. The sequence is that of Neuronal acetylcholine receptor subunit eat-2 from Caenorhabditis elegans.